The chain runs to 95 residues: U8-barytoxin-Tl1a (95 aa).

An N-terminal signal peptide occupies residues 1–21 (MKTLVLVAVLGLASLYLLSYA). Positions 22–50 (SEVQQLSVAEEEFGALIDAFGGLLETEER) are excised as a propeptide. Cystine bridges form between cysteine 57–cysteine 71, cysteine 64–cysteine 76, and cysteine 70–cysteine 86.

Belongs to the neurotoxin 10 (Hwtx-1) family. 26 (ICK-1) subfamily. As to expression, expressed by the venom gland.

The protein resides in the secreted. Ion channel inhibitor. The chain is U8-barytoxin-Tl1a from Trittame loki (Brush-footed trapdoor spider).